A 628-amino-acid polypeptide reads, in one-letter code: FAD-linked oxidoreductase easE (628 aa).

A signal peptide spans 1-20 (MSHRILCVAFCVCSLVAVSS). Positions 144-328 (HQGRIPLYSA…TRATMRVHLN (185 aa)) constitute an FAD-binding PCMH-type domain. At H182 the chain carries Pros-8alpha-FAD histidine. N343, N382, and N487 each carry an N-linked (GlcNAc...) asparagine glycan.

Belongs to the oxygen-dependent FAD-linked oxidoreductase family. FAD serves as cofactor.

Its pathway is alkaloid biosynthesis; ergot alkaloid biosynthesis. Functionally, FAD binding oxidoreductase; part of the gene cluster that mediates the biosynthesis of fumiclavanine C, a fungal ergot alkaloid. DmaW catalyzes the first step of ergot alkaloid biosynthesis by condensing dimethylallyl diphosphate (DMAP) and tryptophan to form 4-dimethylallyl-L-tryptophan. The second step is catalyzed by the methyltransferase easF that methylates 4-dimethylallyl-L-tryptophan in the presence of S-adenosyl-L-methionine, resulting in the formation of 4-dimethylallyl-L-abrine. The catalase easC and the FAD-dependent oxidoreductase easE then transform 4-dimethylallyl-L-abrine to chanoclavine-I which is further oxidized by EasD in the presence of NAD(+), resulting in the formation of chanoclavine-I aldehyde. EasA reduces chanoclavine-I aldehyde to dihydrochanoclavine-I aldehyde that spontaneously dehydrates to form 6,8-dimethyl-6,7-didehydroergoline. EasG then catalyzes the reduction of 6,8-dimethyl-6,7-didehydroergoline to form festuclavine. Hydrolysis of festuclavine by easM then leads to the formation of fumigaclavine B which is in turn acetylated by easN to fumigaclavine A. Finally, easL catalyzes the conversion of fumigaclavine A into fumigaclavine C by attaching a dimethylallyl moiety to C-2 of the indole nucleus. The protein is FAD-linked oxidoreductase easE of Aspergillus fumigatus (strain ATCC MYA-4609 / CBS 101355 / FGSC A1100 / Af293) (Neosartorya fumigata).